The following is a 166-amino-acid chain: MALKTDIRGMVWRYSDYFIVGREQCREFARAIKCDHPAYFSEDAAAELGYDAIVAPLTFVTIFAKYVQLDFFRNVDVGMETMQIVQVDQRFVFHKPVLVGDKLWARMDIHSVSERFGADIVVTKNSCTSDDGELVMEAYTTLMGQQGDNSSQLKWDKESGQVIRSA.

It belongs to the UPF0336 family.

This chain is UPF0336 protein ML1908, found in Mycobacterium leprae (strain TN).